We begin with the raw amino-acid sequence, 686 residues long: Forkhead box protein P1 (686 aa).

2 stretches are compositionally biased toward polar residues: residues 1-19 and 279-292; these read MMQESGTETKSNGSAIQNG and IINPHASTNGQLSV. Disordered stretches follow at residues 1–23 and 279–306; these read MMQESGTETKSNGSAIQNGASGG and IINPHASTNGQLSVHTPKRESLSHEEHS. Residues 295–306 show a composition bias toward basic and acidic residues; it reads PKRESLSHEEHS. The C2H2-type zinc-finger motif lies at 315 to 340; sequence GVCKWPGCEAVCEDFQSFLKHLNSEH. Residues 357 to 378 form a leucine-zipper region; that stretch reads VQQLELQLAKDKERLQAMMTHL. Residues 391 to 395 form a CTBP1-binding region; it reads PLNLV. Residues 403-412 are compositionally biased toward polar residues; it reads TASEASPQSL. A disordered region spans residues 403–440; that stretch reads TASEASPQSLPHTPTTPTAPITPVTQGPSVITTTSMHN. The segment covering 413–427 has biased composition (low complexity); it reads PHTPTTPTAPITPVT. Residues 428–439 are compositionally biased toward polar residues; it reads QGPSVITTTSMH. A DNA-binding region (fork-head) is located at residues 474-564; that stretch reads RPPFTYASLI…PQKISGNPSL (91 aa). The disordered stretch occupies residues 619-686; sequence MEHTNSNGSD…EDEPVNEDIE (68 aa). The segment covering 621-632 has biased composition (polar residues); that stretch reads HTNSNGSDSSPG. Residues 676–686 show a composition bias toward acidic residues; sequence YEDEPVNEDIE.

It localises to the nucleus. Functionally, transcriptional repressor. The chain is Forkhead box protein P1 (FOXP1) from Gallus gallus (Chicken).